We begin with the raw amino-acid sequence, 708 residues long: UvrABC system protein B (708 aa).

A Helicase ATP-binding domain is found at 32–419 (EGIQSGKTAQ…GGEVVEQIIR (388 aa)). 45–52 (GATGTGKT) contacts ATP. A Beta-hairpin motif is present at residues 98–121 (YYDYYQPEAYIPQRDVYIEKDSSI). The region spanning 436 to 598 (QVTHLLEQVR…IVPKTVRKSI (163 aa)) is the Helicase C-terminal domain. The region spanning 627-662 (IEYVDKLEQEMLAAAEDLEFERAARLRDRVLQLKEH) is the UVR domain. A disordered region spans residues 668–708 (SEVEIVDEKSAGKSGGRGRGRRGAKKKGASKGTKIPRPKRG). The segment covering 683-708 (GRGRGRRGAKKKGASKGTKIPRPKRG) has biased composition (basic residues).

Belongs to the UvrB family. Forms a heterotetramer with UvrA during the search for lesions. Interacts with UvrC in an incision complex.

It localises to the cytoplasm. Functionally, the UvrABC repair system catalyzes the recognition and processing of DNA lesions. A damage recognition complex composed of 2 UvrA and 2 UvrB subunits scans DNA for abnormalities. Upon binding of the UvrA(2)B(2) complex to a putative damaged site, the DNA wraps around one UvrB monomer. DNA wrap is dependent on ATP binding by UvrB and probably causes local melting of the DNA helix, facilitating insertion of UvrB beta-hairpin between the DNA strands. Then UvrB probes one DNA strand for the presence of a lesion. If a lesion is found the UvrA subunits dissociate and the UvrB-DNA preincision complex is formed. This complex is subsequently bound by UvrC and the second UvrB is released. If no lesion is found, the DNA wraps around the other UvrB subunit that will check the other stand for damage. This chain is UvrABC system protein B, found in Rhodopirellula baltica (strain DSM 10527 / NCIMB 13988 / SH1).